A 475-amino-acid polypeptide reads, in one-letter code: MKYELVVGLEVHCQLNTTSKAFCGCSAKFGKSANTNVCPVCLALPGALPVLNRRVVEDAVKLGLATGCSIAPHSVLARKNYFYPDLPKGYQISQFEEPICSEGMVHIDAGEGNREIRLIRIHIEEDAGKSIHDIGEETYIDLNRSGVPLLEIVSYPDLRTSKEASAYLQKVRQIVKYLGISDGNMEEGSLRCDANVSLRPVGETEYGTRTEIKNMNSFKNVEKAIDYEVERHREILEAGGVILQETRLWDADKGETRSMRGKEFAHDYRYFPDPDLVPVLVDQEMIDRIMSELPEFPEERAVRFVDEYAIPAYDAAVLTVEREVADYFEESVRVSGDAKASSNWVMGEVMRVLKESYLDIAEFSILPERLGGLIALIGKGVISTTIAKQVFELMLKSGDAPAEIVEREGLAQVSDSGAIETVVQAILDANPGQLAAYRGGKTKLLGFFVGQCMSQMKGKANPQMVNEVLLRKLEG.

It belongs to the GatB/GatE family. GatB subfamily. As to quaternary structure, heterotrimer of A, B and C subunits.

It catalyses the reaction L-glutamyl-tRNA(Gln) + L-glutamine + ATP + H2O = L-glutaminyl-tRNA(Gln) + L-glutamate + ADP + phosphate + H(+). It carries out the reaction L-aspartyl-tRNA(Asn) + L-glutamine + ATP + H2O = L-asparaginyl-tRNA(Asn) + L-glutamate + ADP + phosphate + 2 H(+). Allows the formation of correctly charged Asn-tRNA(Asn) or Gln-tRNA(Gln) through the transamidation of misacylated Asp-tRNA(Asn) or Glu-tRNA(Gln) in organisms which lack either or both of asparaginyl-tRNA or glutaminyl-tRNA synthetases. The reaction takes place in the presence of glutamine and ATP through an activated phospho-Asp-tRNA(Asn) or phospho-Glu-tRNA(Gln). The polypeptide is Aspartyl/glutamyl-tRNA(Asn/Gln) amidotransferase subunit B (Pelodictyon phaeoclathratiforme (strain DSM 5477 / BU-1)).